A 207-amino-acid polypeptide reads, in one-letter code: Thiamine-phosphate synthase (207 aa).

4-amino-2-methyl-5-(diphosphooxymethyl)pyrimidine is bound by residues 35-39 and Asn67; that span reads QYRDK. Residues Asp68 and Asp86 each contribute to the Mg(2+) site. Residue Thr105 participates in 4-amino-2-methyl-5-(diphosphooxymethyl)pyrimidine binding. 132–134 provides a ligand contact to 2-[(2R,5Z)-2-carboxy-4-methylthiazol-5(2H)-ylidene]ethyl phosphate; the sequence is SVT. Lys135 contributes to the 4-amino-2-methyl-5-(diphosphooxymethyl)pyrimidine binding site. Gly162 contributes to the 2-[(2R,5Z)-2-carboxy-4-methylthiazol-5(2H)-ylidene]ethyl phosphate binding site.

This sequence belongs to the thiamine-phosphate synthase family. Mg(2+) serves as cofactor.

It catalyses the reaction 2-[(2R,5Z)-2-carboxy-4-methylthiazol-5(2H)-ylidene]ethyl phosphate + 4-amino-2-methyl-5-(diphosphooxymethyl)pyrimidine + 2 H(+) = thiamine phosphate + CO2 + diphosphate. The catalysed reaction is 2-(2-carboxy-4-methylthiazol-5-yl)ethyl phosphate + 4-amino-2-methyl-5-(diphosphooxymethyl)pyrimidine + 2 H(+) = thiamine phosphate + CO2 + diphosphate. The enzyme catalyses 4-methyl-5-(2-phosphooxyethyl)-thiazole + 4-amino-2-methyl-5-(diphosphooxymethyl)pyrimidine + H(+) = thiamine phosphate + diphosphate. Its pathway is cofactor biosynthesis; thiamine diphosphate biosynthesis; thiamine phosphate from 4-amino-2-methyl-5-diphosphomethylpyrimidine and 4-methyl-5-(2-phosphoethyl)-thiazole: step 1/1. Its function is as follows. Condenses 4-methyl-5-(beta-hydroxyethyl)thiazole monophosphate (THZ-P) and 2-methyl-4-amino-5-hydroxymethyl pyrimidine pyrophosphate (HMP-PP) to form thiamine monophosphate (TMP). This Pseudomonas putida (strain GB-1) protein is Thiamine-phosphate synthase.